A 399-amino-acid chain; its full sequence is Elongation factor Tu (399 aa).

Residues 10–209 (KPHVNIGTIG…AVDSYIPTPK (200 aa)) enclose the tr-type G domain. Positions 19-26 (GHVDHGKT) are G1. 19 to 26 (GHVDHGKT) is a binding site for GTP. T26 contacts Mg(2+). Residues 60 to 64 (GITIA) form a G2 region. The tract at residues 81–84 (DCPG) is G3. GTP-binding positions include 81–85 (DCPGH) and 136–139 (NKTD). A G4 region spans residues 136-139 (NKTD). Residues 174 to 176 (SAL) form a G5 region.

The protein belongs to the TRAFAC class translation factor GTPase superfamily. Classic translation factor GTPase family. EF-Tu/EF-1A subfamily. In terms of assembly, monomer.

The protein localises to the cytoplasm. It catalyses the reaction GTP + H2O = GDP + phosphate + H(+). GTP hydrolase that promotes the GTP-dependent binding of aminoacyl-tRNA to the A-site of ribosomes during protein biosynthesis. This Campylobacter hominis (strain ATCC BAA-381 / DSM 21671 / CCUG 45161 / LMG 19568 / NCTC 13146 / CH001A) protein is Elongation factor Tu.